A 376-amino-acid polypeptide reads, in one-letter code: Phosphoserine aminotransferase (376 aa).

Arg42 is an L-glutamate binding site. Positions 104, 163, 188, and 211 each coordinate pyridoxal 5'-phosphate. Lys212 carries the N6-(pyridoxal phosphate)lysine modification. Residue 253 to 254 (NT) coordinates pyridoxal 5'-phosphate.

This sequence belongs to the class-V pyridoxal-phosphate-dependent aminotransferase family. SerC subfamily. In terms of assembly, homodimer. Requires pyridoxal 5'-phosphate as cofactor.

The protein localises to the cytoplasm. The enzyme catalyses O-phospho-L-serine + 2-oxoglutarate = 3-phosphooxypyruvate + L-glutamate. It carries out the reaction 4-(phosphooxy)-L-threonine + 2-oxoglutarate = (R)-3-hydroxy-2-oxo-4-phosphooxybutanoate + L-glutamate. It participates in amino-acid biosynthesis; L-serine biosynthesis; L-serine from 3-phospho-D-glycerate: step 2/3. It functions in the pathway cofactor biosynthesis; pyridoxine 5'-phosphate biosynthesis; pyridoxine 5'-phosphate from D-erythrose 4-phosphate: step 3/5. In terms of biological role, catalyzes the reversible conversion of 3-phosphohydroxypyruvate to phosphoserine and of 3-hydroxy-2-oxo-4-phosphonooxybutanoate to phosphohydroxythreonine. This Bordetella avium (strain 197N) protein is Phosphoserine aminotransferase.